The sequence spans 243 residues: F-box protein pof15 (243 aa).

The 46-residue stretch at 28–73 (QTSSTLLPVEVIDSVMQYLPAHDVIQSSFASYPLTLIANKIIRARL) folds into the F-box domain.

It participates in protein modification; protein ubiquitination. Functionally, probable substrate recognition component of a SCF (SKP1-CUL1-F-box protein) E3 ubiquitin-protein ligase complex that mediates the ubiquitination and subsequent proteasomal degradation of target proteins. In Schizosaccharomyces pombe (strain 972 / ATCC 24843) (Fission yeast), this protein is F-box protein pof15 (pof15).